A 138-amino-acid polypeptide reads, in one-letter code: Large ribosomal subunit protein uL14 (138 aa).

This sequence belongs to the universal ribosomal protein uL14 family. In terms of assembly, part of the 50S ribosomal subunit. Forms a cluster with proteins L3 and L24e, part of which may contact the 16S rRNA in 2 intersubunit bridges. Contacts initiation factor aIF-6.

Its subcellular location is the cytoplasm. Its function is as follows. Binds to 23S rRNA. Forms part of two intersubunit bridges in the 70S ribosome. This chain is Large ribosomal subunit protein uL14, found in Saccharolobus solfataricus (strain ATCC 35092 / DSM 1617 / JCM 11322 / P2) (Sulfolobus solfataricus).